A 1040-amino-acid chain; its full sequence is Desmoglein-4 (1040 aa).

A signal peptide spans 1 to 23; that stretch reads MDWLLFRNICLLILFMVVLGVNS. Positions 24–49 are excised as a propeptide; the sequence is EFIVEVKELDIENGTTTWQTVRRQKR. Cadherin domains lie at 50 to 157, 158 to 269, 270 to 385, and 389 to 497; these read EWIK…PPVF, TQNV…FPIL, EKTS…GPTF, and SMTF…CPVI. Over 50 to 633 the chain is Extracellular; it reads EWIKFAAACR…RQSNVGLGPA (584 aa). Residue Asn-110 is glycosylated (N-linked (GlcNAc...) asparagine). Asn-545 is a glycosylation site (N-linked (GlcNAc...) asparagine). The chain crosses the membrane as a helical span at residues 634–654; sequence GIGMIILGLLLLFLSPLLLLM. Topologically, residues 655 to 1040 are cytoplasmic; sequence CCCKRRQPEG…RYSNIHYSRQ (386 aa). Desmoglein repeat repeat units lie at residues 883–909 and 910–940; these read TLSE…IVTE and TYTA…ETVM. A disordered region spans residues 1015–1040; that stretch reads QTTRSTSPMTSQHRVTRYSNIHYSRQ.

Interacts with JUP.

The protein localises to the cell membrane. It localises to the cell junction. Its subcellular location is the desmosome. Functionally, a component of desmosome cell-cell junctions which are required for positive regulation of cellular adhesion. Coordinates the transition from proliferation to differentiation in hair follicle keratinocytes. Plays a role in moderating lymphocyte migration to inflamed skin and maintaining homeostasis of the epidermal inflammatory response. The chain is Desmoglein-4 (Dsg4) from Rattus norvegicus (Rat).